The primary structure comprises 120 residues: Large ribosomal subunit protein uL18 (120 aa).

This sequence belongs to the universal ribosomal protein uL18 family. As to quaternary structure, part of the 50S ribosomal subunit; part of the 5S rRNA/L5/L18/L25 subcomplex. Contacts the 5S and 23S rRNAs.

This is one of the proteins that bind and probably mediate the attachment of the 5S RNA into the large ribosomal subunit, where it forms part of the central protuberance. The protein is Large ribosomal subunit protein uL18 of Treponema denticola (strain ATCC 35405 / DSM 14222 / CIP 103919 / JCM 8153 / KCTC 15104).